Consider the following 398-residue polypeptide: Elongation factor Tu (398 aa).

The tr-type G domain maps to 10 to 208 (KPHVNVGTIG…ALDSHIPEPT (199 aa)). The G1 stretch occupies residues 19 to 26 (GHIDHGKT). 19–26 (GHIDHGKT) serves as a coordination point for GTP. T26 lines the Mg(2+) pocket. The interval 60–64 (TKTVT) is G2. The segment at 83 to 86 (DCPG) is G3. Residues 83–87 (DCPGH) and 138–141 (NKCD) each bind GTP. Residues 138–141 (NKCD) form a G4 region. A G5 region spans residues 176–178 (SSL).

Belongs to the TRAFAC class translation factor GTPase superfamily. Classic translation factor GTPase family. EF-Tu/EF-1A subfamily. In terms of assembly, monomer.

It is found in the cytoplasm. The enzyme catalyses GTP + H2O = GDP + phosphate + H(+). Its function is as follows. GTP hydrolase that promotes the GTP-dependent binding of aminoacyl-tRNA to the A-site of ribosomes during protein biosynthesis. In Rhodopirellula baltica (strain DSM 10527 / NCIMB 13988 / SH1), this protein is Elongation factor Tu.